A 366-amino-acid polypeptide reads, in one-letter code: UDP-N-acetylenolpyruvoylglucosamine reductase (366 aa).

The region spanning 29–203 (VGPVARTLVT…LEVEFALDAS (175 aa)) is the FAD-binding PCMH-type domain. The active site involves R177. Catalysis depends on S258, which acts as the Proton donor. E358 is a catalytic residue.

The protein belongs to the MurB family. Requires FAD as cofactor.

The protein resides in the cytoplasm. The enzyme catalyses UDP-N-acetyl-alpha-D-muramate + NADP(+) = UDP-N-acetyl-3-O-(1-carboxyvinyl)-alpha-D-glucosamine + NADPH + H(+). It participates in cell wall biogenesis; peptidoglycan biosynthesis. In terms of biological role, cell wall formation. The polypeptide is UDP-N-acetylenolpyruvoylglucosamine reductase (Mycobacterium marinum (strain ATCC BAA-535 / M)).